Consider the following 135-residue polypeptide: Large ribosomal subunit protein uL16c (135 aa).

This sequence belongs to the universal ribosomal protein uL16 family. Part of the 50S ribosomal subunit.

The protein resides in the plastid. The protein localises to the chloroplast. This is Large ribosomal subunit protein uL16c from Stigeoclonium helveticum (Green alga).